Here is a 140-residue protein sequence, read N- to C-terminus: Organic hydroperoxide resistance protein-like (140 aa).

It belongs to the OsmC/Ohr family.

The polypeptide is Organic hydroperoxide resistance protein-like (Staphylococcus aureus (strain bovine RF122 / ET3-1)).